The sequence spans 134 residues: Arsenate reductase (134 aa).

Catalysis depends on nucleophile residues Cys11, Cys83, and Cys90. 2 disulfide bridges follow: Cys11–Cys83 and Cys83–Cys90.

It belongs to the low molecular weight phosphotyrosine protein phosphatase family. Thioredoxin-coupled ArsC subfamily.

The protein localises to the cytoplasm. It catalyses the reaction arsenate + [thioredoxin]-dithiol + H(+) = arsenite + [thioredoxin]-disulfide + H2O. In terms of biological role, catalyzes the reduction of arsenate [As(V)] to arsenite [As(III)]. In Bacillus cereus (strain Q1), this protein is Arsenate reductase.